A 208-amino-acid chain; its full sequence is Peptide deformylase 3 (208 aa).

Fe cation contacts are provided by C120 and H162. Residue E163 is part of the active site. A Fe cation-binding site is contributed by H166.

It belongs to the polypeptide deformylase family. Fe(2+) is required as a cofactor.

The catalysed reaction is N-terminal N-formyl-L-methionyl-[peptide] + H2O = N-terminal L-methionyl-[peptide] + formate. Functionally, removes the formyl group from the N-terminal Met of newly synthesized proteins. Requires at least a dipeptide for an efficient rate of reaction. N-terminal L-methionine is a prerequisite for activity but the enzyme has broad specificity at other positions. In Streptomyces coelicolor (strain ATCC BAA-471 / A3(2) / M145), this protein is Peptide deformylase 3.